A 297-amino-acid chain; its full sequence is UPF0761 membrane protein VC0395_A2314/VC395_2854 (297 aa).

A run of 6 helical transmembrane segments spans residues Leu43 to Phe63, Met100 to Asp120, Ala135 to Ala155, Phe181 to Val201, Leu213 to Ile233, and Ala245 to Val265.

Belongs to the UPF0761 family.

The protein localises to the cell inner membrane. In Vibrio cholerae serotype O1 (strain ATCC 39541 / Classical Ogawa 395 / O395), this protein is UPF0761 membrane protein VC0395_A2314/VC395_2854.